A 766-amino-acid chain; its full sequence is Phosphoribosylformylglycinamidine synthase subunit PurL (766 aa).

Residue His46 is part of the active site. ATP contacts are provided by Tyr49 and Lys88. Glu90 provides a ligand contact to Mg(2+). Substrate is bound by residues 91–94 (SHNH) and Arg113. His92 (proton acceptor) is an active-site residue. Position 114 (Asp114) interacts with Mg(2+). Residue Gln237 coordinates substrate. A Mg(2+)-binding site is contributed by Asp265. Residue 309 to 311 (ESQ) participates in substrate binding. The ATP site is built by Asp520 and Gly557. Residue Asn558 coordinates Mg(2+). Ser560 provides a ligand contact to substrate.

This sequence belongs to the FGAMS family. Monomer. Part of the FGAM synthase complex composed of 1 PurL, 1 PurQ and 2 PurS subunits.

Its subcellular location is the cytoplasm. It catalyses the reaction N(2)-formyl-N(1)-(5-phospho-beta-D-ribosyl)glycinamide + L-glutamine + ATP + H2O = 2-formamido-N(1)-(5-O-phospho-beta-D-ribosyl)acetamidine + L-glutamate + ADP + phosphate + H(+). Its pathway is purine metabolism; IMP biosynthesis via de novo pathway; 5-amino-1-(5-phospho-D-ribosyl)imidazole from N(2)-formyl-N(1)-(5-phospho-D-ribosyl)glycinamide: step 1/2. Part of the phosphoribosylformylglycinamidine synthase complex involved in the purines biosynthetic pathway. Catalyzes the ATP-dependent conversion of formylglycinamide ribonucleotide (FGAR) and glutamine to yield formylglycinamidine ribonucleotide (FGAM) and glutamate. The FGAM synthase complex is composed of three subunits. PurQ produces an ammonia molecule by converting glutamine to glutamate. PurL transfers the ammonia molecule to FGAR to form FGAM in an ATP-dependent manner. PurS interacts with PurQ and PurL and is thought to assist in the transfer of the ammonia molecule from PurQ to PurL. The protein is Phosphoribosylformylglycinamidine synthase subunit PurL of Synechococcus sp. (strain JA-3-3Ab) (Cyanobacteria bacterium Yellowstone A-Prime).